The chain runs to 98 residues: La1-like protein 13 (98 aa).

The signal sequence occupies residues 1 to 24 (MERILKPVFLAILIVLSFSSQCMG). K97 is subject to Lysine amide.

This sequence belongs to the scorpion La1-like peptide family. Post-translationally, contains 4 disulfide bonds. Expressed by the venom gland.

It is found in the secreted. The chain is La1-like protein 13 from Urodacus yaschenkoi (Inland robust scorpion).